A 100-amino-acid polypeptide reads, in one-letter code: Urease subunit gamma (100 aa).

Belongs to the urease gamma subunit family. In terms of assembly, heterotrimer of UreA (gamma), UreB (beta) and UreC (alpha) subunits. Three heterotrimers associate to form the active enzyme.

The protein localises to the cytoplasm. It carries out the reaction urea + 2 H2O + H(+) = hydrogencarbonate + 2 NH4(+). It participates in nitrogen metabolism; urea degradation; CO(2) and NH(3) from urea (urease route): step 1/1. The sequence is that of Urease subunit gamma from Escherichia coli O157:H7 (strain EC4115 / EHEC).